We begin with the raw amino-acid sequence, 931 residues long: Probable zinc protease PqqL (931 aa).

His-80 serves as a coordination point for Zn(2+). Catalysis depends on Glu-83, which acts as the Proton acceptor. Residues His-84 and Glu-160 each contribute to the Zn(2+) site.

It belongs to the peptidase M16 family. Zn(2+) is required as a cofactor.

This chain is Probable zinc protease PqqL (pqqL), found in Escherichia coli (strain K12).